A 431-amino-acid chain; its full sequence is Mannan endo-1,4-beta-mannosidase 5 (431 aa).

The first 24 residues, 1–24, serve as a signal peptide directing secretion; that stretch reads MVPTRNRPMLRILGFFICAAFIYL. N45 is a glycosylation site (N-linked (GlcNAc...) asparagine). W97 contacts substrate. A glycan (N-linked (GlcNAc...) asparagine) is linked at N168. N213 provides a ligand contact to substrate. E214 serves as the catalytic Proton donor. N-linked (GlcNAc...) asparagine glycosylation is present at N282. Residue Y294 participates in substrate binding. N301 carries N-linked (GlcNAc...) asparagine glycosylation. E334 (nucleophile) is an active-site residue. Residue W376 coordinates substrate.

Belongs to the glycosyl hydrolase 5 (cellulase A) family. As to expression, expressed in stems.

It is found in the secreted. It catalyses the reaction Random hydrolysis of (1-&gt;4)-beta-D-mannosidic linkages in mannans, galactomannans and glucomannans.. This chain is Mannan endo-1,4-beta-mannosidase 5 (MAN5), found in Arabidopsis thaliana (Mouse-ear cress).